Consider the following 631-residue polypeptide: Phosphomethylpyrimidine synthase (631 aa).

Substrate is bound by residues asparagine 239, methionine 268, tyrosine 297, histidine 333, 353 to 355 (SRG), 394 to 397 (DGLR), and glutamate 433. Histidine 437 contacts Zn(2+). Tyrosine 460 provides a ligand contact to substrate. Histidine 501 provides a ligand contact to Zn(2+). Cysteine 581, cysteine 584, and cysteine 589 together coordinate [4Fe-4S] cluster.

It belongs to the ThiC family. As to quaternary structure, homodimer. Requires [4Fe-4S] cluster as cofactor.

The catalysed reaction is 5-amino-1-(5-phospho-beta-D-ribosyl)imidazole + S-adenosyl-L-methionine = 4-amino-2-methyl-5-(phosphooxymethyl)pyrimidine + CO + 5'-deoxyadenosine + formate + L-methionine + 3 H(+). It participates in cofactor biosynthesis; thiamine diphosphate biosynthesis. Catalyzes the synthesis of the hydroxymethylpyrimidine phosphate (HMP-P) moiety of thiamine from aminoimidazole ribotide (AIR) in a radical S-adenosyl-L-methionine (SAM)-dependent reaction. The polypeptide is Phosphomethylpyrimidine synthase (Escherichia coli O6:K15:H31 (strain 536 / UPEC)).